The sequence spans 217 residues: 3,4-dihydroxy-2-butanone 4-phosphate synthase (217 aa).

Residues 37–38 (RE), Asp-42, 150–154 (RRGHT), and Glu-174 each bind D-ribulose 5-phosphate. Residue Glu-38 participates in Mg(2+) binding. A Mg(2+)-binding site is contributed by His-153.

It belongs to the DHBP synthase family. Homodimer. Mg(2+) serves as cofactor. Mn(2+) is required as a cofactor.

It catalyses the reaction D-ribulose 5-phosphate = (2S)-2-hydroxy-3-oxobutyl phosphate + formate + H(+). The protein operates within cofactor biosynthesis; riboflavin biosynthesis; 2-hydroxy-3-oxobutyl phosphate from D-ribulose 5-phosphate: step 1/1. Functionally, catalyzes the conversion of D-ribulose 5-phosphate to formate and 3,4-dihydroxy-2-butanone 4-phosphate. This Serratia proteamaculans (strain 568) protein is 3,4-dihydroxy-2-butanone 4-phosphate synthase.